We begin with the raw amino-acid sequence, 578 residues long: MGEIERPRSLSRITVHSDAEYLDAYDHVTYSNSLELLDTIAETQITLNLFMNNKFELAEERMAELYDKSMYHSMGYTCILFIKAVMTVNKQDMEKAAEASKLSCEIIEKFRERRSIKETIFGASAKGKKMTDEELHAELCYAQSLLIRAMLTFFHDDNFASFIKGALNIRTCYQTYRYCEKLMNEPSVWVGRNKKVQEQFESGTRMGLGTFSLMLSVLPSKVLRLLEVVGFSGDKVAGMRDLHHVASMTGTLCSPLAKMVLLTWHLIISFVLGTGQPDLEVCKRLMPGLTHLWPRGAIMLFMKARLLLISGDIEAAIHYFNMSIESQDVYKQFHHGCYWELLFAHGYQRRWSHSANYARLLMKESKWSRCVYTYLLCIFFAADETVEEGRRNETINALAGKVDGLRIRIAGKSIPVEKYCGRKAKRFTTTNSLLFAHYEFIYFWNGFDIFGKNSKMVRGIVEDMDRVWEMKKSTCDIDDYCLYYFLKGVALRHLSLHAQAEECFKIVLERESSIKSFTYLPPNATYELAMLRISEQQFMEAQTLLDKARAYKSYSLENKLHFRIHSAMGTMGCRTPMM.

TPR repeat units follow at residues alanine 297–tyrosine 330, cysteine 481–isoleucine 514, and proline 522–tyrosine 554.

In Caenorhabditis elegans, this protein is Tetratricopeptide repeat protein ttc-39B.